The chain runs to 264 residues: Small ribosomal subunit protein uS2 (264 aa).

The segment at 228–264 (QLDAEDDYEDYDGSEYDDDYEETEYTDAVIPDEETEE) is disordered. Positions 230–264 (DAEDDYEDYDGSEYDDDYEETEYTDAVIPDEETEE) are enriched in acidic residues.

This sequence belongs to the universal ribosomal protein uS2 family.

In Nostoc punctiforme (strain ATCC 29133 / PCC 73102), this protein is Small ribosomal subunit protein uS2.